An 866-amino-acid polypeptide reads, in one-letter code: DNA mismatch repair protein MutS (866 aa).

An ATP-binding site is contributed by 613–620 (GPNMGGKS).

The protein belongs to the DNA mismatch repair MutS family.

Its function is as follows. This protein is involved in the repair of mismatches in DNA. It is possible that it carries out the mismatch recognition step. This protein has a weak ATPase activity. This is DNA mismatch repair protein MutS from Haemophilus ducreyi (strain 35000HP / ATCC 700724).